Reading from the N-terminus, the 600-residue chain is Zinc metalloproteinase-disintegrin-like stejnihagin-B (600 aa).

Positions 1-20 (MIEVLLVTICLAVFPYQGSS) are cleaved as a signal peptide. Residues 21–191 (IILESGNVND…KASQLVVTAE (171 aa)) constitute a propeptide that is removed on maturation. Gln192 is subject to Pyrrolidone carboxylic acid. The Peptidase M12B domain occupies 198 to 389 (RYVKLAIVAD…YNPQCILNAL (192 aa)). N-linked (GlcNAc...) asparagine glycans are attached at residues Asn261 and Asn317. 3 cysteine pairs are disulfide-bonded: Cys306–Cys384, Cys346–Cys368, and Cys348–Cys351. His331 contacts Zn(2+). The active site involves Glu332. Zn(2+)-binding residues include His335 and His341. Residues 397 to 483 (PPVCGNELLE…DCPTDSFHRN (87 aa)) enclose the Disintegrin domain. Ca(2+) is bound by residues Val399, Asn402, Leu404, Glu406, Glu409, and Asp412. Disulfide bonds link Cys400–Cys429, Cys411–Cys424, Cys413–Cys419, Cys423–Cys446, Cys437–Cys443, Cys442–Cys468, Cys455–Cys475, Cys462–Cys494, Cys487–Cys499, Cys506–Cys556, Cys521–Cys565, Cys534–Cys544, Cys551–Cys587, and Cys581–Cys593. Asn425 is a glycosylation site (N-linked (GlcNAc...) asparagine). The D/ECD-tripeptide motif lies at 461–463 (ECD). Residue Asn467 is glycosylated (N-linked (GlcNAc...) asparagine). Asn513 carries an N-linked (GlcNAc...) asparagine glycan.

Belongs to the venom metalloproteinase (M12B) family. P-III subfamily. P-IIIa sub-subfamily. In terms of assembly, monomer. Requires Zn(2+) as cofactor. As to expression, expressed by the venom gland.

Its subcellular location is the secreted. In terms of biological role, this metalloproteinase-disintegrin-like impairs hemostasis in the envenomed animal. The sequence is that of Zinc metalloproteinase-disintegrin-like stejnihagin-B from Trimeresurus stejnegeri (Chinese green tree viper).